A 586-amino-acid chain; its full sequence is Glutamate--tRNA ligase (586 aa).

The short motif at 114-124 is the 'HIGH' region element; that stretch reads PNPNGPWHVGH. Composition is skewed to basic and acidic residues over residues 431–443 and 459–468; these read ARGEGPEESHEAV and HPEHPDRGDR. Residues 431–468 are disordered; the sequence is ARGEGPEESHEAVEVPVDDGPDEATPQVHPEHPDRGDR.

Belongs to the class-I aminoacyl-tRNA synthetase family. Glutamate--tRNA ligase type 2 subfamily.

The protein resides in the cytoplasm. The enzyme catalyses tRNA(Glu) + L-glutamate + ATP = L-glutamyl-tRNA(Glu) + AMP + diphosphate. Functionally, catalyzes the attachment of glutamate to tRNA(Glu) in a two-step reaction: glutamate is first activated by ATP to form Glu-AMP and then transferred to the acceptor end of tRNA(Glu). The protein is Glutamate--tRNA ligase of Halobacterium salinarum (strain ATCC 29341 / DSM 671 / R1).